Reading from the N-terminus, the 321-residue chain is Cytochrome c biogenesis protein CcsA (321 aa).

The next 8 helical transmembrane spans lie at 12–32 (HISF…LLVY), 45–62 (MIAT…RWIS), 71–91 (LYES…ILYI), 98–117 (LNAI…TSGL), 143–163 (MLLS…LIVI), 227–247 (VISL…VWAN), 260–277 (ETWA…LHTR), and 292–312 (VASI…LLGI).

Belongs to the CcmF/CycK/Ccl1/NrfE/CcsA family. In terms of assembly, may interact with Ccs1.

The protein resides in the plastid. Its subcellular location is the chloroplast thylakoid membrane. Its function is as follows. Required during biogenesis of c-type cytochromes (cytochrome c6 and cytochrome f) at the step of heme attachment. This Phalaenopsis aphrodite subsp. formosana (Moth orchid) protein is Cytochrome c biogenesis protein CcsA.